The sequence spans 1167 residues: ATP-dependent helicase/nuclease subunit A (1167 aa).

The 450-residue stretch at 2–451 (KNWTAEQMRA…IELSLNFRSR (450 aa)) folds into the UvrD-like helicase ATP-binding domain. Residue 23–30 (AAAGAGKT) participates in ATP binding. One can recognise a UvrD-like helicase C-terminal domain in the interval 478–768 (KAFLKKGADY…RVMSVHKSKG (291 aa)).

Belongs to the helicase family. AddA subfamily. As to quaternary structure, heterodimer of AddA and AddB/RexB. Mg(2+) serves as cofactor.

It carries out the reaction Couples ATP hydrolysis with the unwinding of duplex DNA by translocating in the 3'-5' direction.. The enzyme catalyses ATP + H2O = ADP + phosphate + H(+). In terms of biological role, the heterodimer acts as both an ATP-dependent DNA helicase and an ATP-dependent, dual-direction single-stranded exonuclease. Recognizes the chi site generating a DNA molecule suitable for the initiation of homologous recombination. The AddA nuclease domain is required for chi fragment generation; this subunit has the helicase and 3' -&gt; 5' nuclease activities. The sequence is that of ATP-dependent helicase/nuclease subunit A from Carboxydothermus hydrogenoformans (strain ATCC BAA-161 / DSM 6008 / Z-2901).